The following is a 419-amino-acid chain: 3-isopropylmalate dehydratase large subunit (419 aa).

[4Fe-4S] cluster contacts are provided by C300, C360, and C363.

It belongs to the aconitase/IPM isomerase family. LeuC type 2 subfamily. Heterodimer of LeuC and LeuD. It depends on [4Fe-4S] cluster as a cofactor.

The enzyme catalyses (2R,3S)-3-isopropylmalate = (2S)-2-isopropylmalate. It functions in the pathway amino-acid biosynthesis; L-leucine biosynthesis; L-leucine from 3-methyl-2-oxobutanoate: step 2/4. In terms of biological role, catalyzes the isomerization between 2-isopropylmalate and 3-isopropylmalate, via the formation of 2-isopropylmaleate. In Clostridium botulinum (strain Alaska E43 / Type E3), this protein is 3-isopropylmalate dehydratase large subunit.